Reading from the N-terminus, the 256-residue chain is Small ribosomal subunit protein eS1 (256 aa).

Alanine 2 is subject to N-acetylalanine; partial.

This sequence belongs to the eukaryotic ribosomal protein eS1 family. In terms of assembly, component of the small ribosomal subunit. Mature ribosomes consist of a small (40S) and a large (60S) subunit. The 40S subunit contains about 33 different proteins and 1 molecule of RNA (18S). The 60S subunit contains about 49 different proteins and 3 molecules of RNA (25S, 5.8S and 5S).

It is found in the cytoplasm. This chain is Small ribosomal subunit protein eS1, found in Meyerozyma guilliermondii (strain ATCC 6260 / CBS 566 / DSM 6381 / JCM 1539 / NBRC 10279 / NRRL Y-324) (Yeast).